A 334-amino-acid polypeptide reads, in one-letter code: N-acetylmuramoyl-L-alanine amidase sle1 (334 aa).

Residues 1 to 25 (MQKKVIAAIIGTSAISAVAATQANA) form the signal peptide. A LysM 1 domain is found at 27-70 (TTHTVKPGESVWAISNKYGISIAKLKSLNNLTSNLIFPNQVLKV). Over residues 71–86 (SGSSNSTSNSSRPSTN) the composition is skewed to low complexity. The tract at residues 71-90 (SGSSNSTSNSSRPSTNSGGG) is disordered. One can recognise a LysM 2 domain in the interval 91–134 (SYYTVQAGDSLSLIASKYGTTYQNIMRLNGLNNFFIYPGQKLKV). Positions 137–156 (TASSSNSTSNSSRPSTNSSG) are disordered. The region spanning 158–201 (SYYTVQAGDSLSLIASKYGTTYQNIMRLNGLNNFFIYPGQKLKV) is the LysM 3 domain. One can recognise a Peptidase C51 domain in the interval 210 to 334 (GSTTTTNRGY…YQVNNYRYIH (125 aa)).

It is found in the secreted. The protein resides in the cell surface. The enzyme catalyses Hydrolyzes the link between N-acetylmuramoyl residues and L-amino acid residues in certain cell-wall glycopeptides.. Its function is as follows. Peptidoglycan hydrolase involved in the splitting of the septum during cell division. This chain is N-acetylmuramoyl-L-alanine amidase sle1 (sle1), found in Staphylococcus aureus (strain MRSA252).